Reading from the N-terminus, the 575-residue chain is Manganese transporter SMF1 (575 aa).

At 1 to 70 (MVNVGPSHAA…TYVSKRQVMR (70 aa)) the chain is on the extracellular side. Phosphoserine is present on S24. Residues K33 and K34 each participate in a glycyl lysine isopeptide (Lys-Gly) (interchain with G-Cter in ubiquitin) cross-link. Residues 71–91 (DIFAKYLKFIGPGLMVSVAYI) traverse the membrane as a helical segment. At 92 to 108 (DPGNYSTAVDAGASNQF) the chain is on the cytoplasmic side. Residues 109-129 (SLLCIILLSNFIAIFLQCLCI) form a helical membrane-spanning segment. The Extracellular portion of the chain corresponds to 130 to 156 (KLGSVTGLDLSRACREYLPRWLNWTLY). Residues 157–177 (FFAECAVIATDIAEVIGTAIA) traverse the membrane as a helical segment. Topologically, residues 178–179 (LN) are cytoplasmic. Residues 180 to 200 (ILIKVPLPAGVAITVVDVFLI) traverse the membrane as a helical segment. Topologically, residues 201–218 (MFTYKPGASSIRFIRIFE) are extracellular. A helical membrane pass occupies residues 219–239 (CFVAVLVVGVCICFAIELAYI). At 240-266 (PKSTSVKQVFRGFVPSAQMFDHNGIYT) the chain is on the cytoplasmic side. A helical membrane pass occupies residues 267-287 (AISILGATVMPHSLFLGSALV). At 288-344 (QPRLLDYDVKHGNYTVSEEQDKVKKSKSTEEIMEEKYFNYRPTNAAIKYCMKYSMVE) the chain is on the extracellular side. Residues 345–365 (LSITLFTLALFVNCAILVVAG) form a helical membrane-spanning segment. At 366 to 396 (STLYNSPEADGADLFTIHELLSRNLAPAAGT) the chain is on the cytoplasmic side. A helical transmembrane segment spans residues 397–417 (IFMLALLLSGQSAGVVCTMSG). At 418–463 (QIVSEGHINWKLQPWQRRLATRCISIIPCLVISICIGREALSKALN) the chain is on the extracellular side. The helical transmembrane segment at 464-484 (ASQVVLSIVLPFLVAPLIFFT) threads the bilayer. Residues 485 to 543 (CKKSIMKTEITVDHTEEDSHNHQNNNDRSAGSVIEQDGSSGMEIENGKDVKIVYMANNW) are Cytoplasmic-facing. Residues 498 to 517 (HTEEDSHNHQNNNDRSAGSV) form a disordered region. Residues 544-564 (IITVIAIIVWLFLSLLNVYAI) form a helical membrane-spanning segment. Residues 565–575 (VQLGMSHGDIS) lie on the Extracellular side of the membrane.

Belongs to the NRAMP family.

The protein localises to the cell membrane. The enzyme catalyses Mn(2+)(in) = Mn(2+)(out). High-affinity manganese transporter involved in manganese uptake from the extracellular environment. Also contributes to cellular accumulation of other divalent metal ions such as cadmium, cobalt, copper, iron and nickel. The chain is Manganese transporter SMF1 (SMF1) from Saccharomyces cerevisiae (strain ATCC 204508 / S288c) (Baker's yeast).